A 276-amino-acid chain; its full sequence is Large ribosomal subunit protein uL2 (276 aa).

The segment at 221–276 (RGSAMNPNDHPHGGGEGRAPIGRKSPMTPWGKKARGVKTRDRKKASNALIIRRRTK) is disordered. The segment covering 252–276 (KKARGVKTRDRKKASNALIIRRRTK) has biased composition (basic residues).

It belongs to the universal ribosomal protein uL2 family. In terms of assembly, part of the 50S ribosomal subunit. Forms a bridge to the 30S subunit in the 70S ribosome.

One of the primary rRNA binding proteins. Required for association of the 30S and 50S subunits to form the 70S ribosome, for tRNA binding and peptide bond formation. It has been suggested to have peptidyltransferase activity; this is somewhat controversial. Makes several contacts with the 16S rRNA in the 70S ribosome. This Aster yellows phytoplasma protein is Large ribosomal subunit protein uL2.